A 1939-amino-acid chain; its full sequence is Myosin-1 (1939 aa).

The Myosin N-terminal SH3-like domain maps to 33 to 82; that stretch reads DAKTSVFVVDPKESFVKATVQSREGGKVTAKTEAGATVTVKDDQVFPMNP. 2 positions are modified to phosphothreonine: Thr64 and Thr69. The Myosin motor domain occupies 86 to 782; sequence DKIEDMAMMT…LLGLLEEMRD (697 aa). The residue at position 130 (Lys130) is an N6,N6,N6-trimethyllysine. An ATP-binding site is contributed by 179–186; the sequence is GESGAGKT. A Phosphotyrosine modification is found at Tyr389. A Phosphothreonine modification is found at Thr419. Phosphotyrosine is present on Tyr424. An actin-binding region spans residues 659 to 681; the sequence is LNKLMTNLRSTHPHFVRCIIPNE. His757 bears the Pros-methylhistidine mark. The tract at residues 761 to 775 is actin-binding; the sequence is KFGHTKVFFKAGLLG. One can recognise an IQ domain in the interval 785–814; sequence LAQLITRTQAMCRGFLARVEYQKMVERRES. Residues 843–1939 adopt a coiled-coil conformation; that stretch reads LLKSAETEKE…EVHTKIISEE (1097 aa). Phosphoserine is present on residues Ser1092, Ser1096, Ser1162, and Ser1237. Residue Thr1241 is modified to Phosphothreonine. Ser1243 and Ser1261 each carry phosphoserine. 2 positions are modified to phosphothreonine: Thr1265 and Thr1286. Phosphoserine occurs at positions 1288, 1292, 1303, and 1306. Thr1467 carries the post-translational modification Phosphothreonine. Ser1474 bears the Phosphoserine mark. Residue Tyr1492 is modified to Phosphotyrosine. The residue at position 1495 (Ser1495) is a Phosphoserine. At Thr1501 the chain carries Phosphothreonine. Position 1514 is a phosphoserine (Ser1514). Thr1517 carries the phosphothreonine modification. A phosphoserine mark is found at Ser1542, Ser1554, Ser1574, Ser1600, Ser1603, Ser1714, and Ser1726. Phosphothreonine occurs at positions 1730 and 1736. Residue Ser1739 is modified to Phosphoserine.

Belongs to the TRAFAC class myosin-kinesin ATPase superfamily. Myosin family. As to quaternary structure, muscle myosin is a hexameric protein that consists of 2 heavy chain subunits (MHC), 2 alkali light chain subunits (MLC) and 2 regulatory light chain subunits (MLC-2). Interacts with SLC26A5.

It is found in the cytoplasm. The protein resides in the myofibril. Functionally, required for normal hearing. It plays a role in cochlear amplification of auditory stimuli, likely through the positive regulation of prestin (SLC26A5) activity and outer hair cell (OHC) electromotility. This Homo sapiens (Human) protein is Myosin-1.